A 335-amino-acid polypeptide reads, in one-letter code: Protein-arginine kinase (335 aa).

One can recognise a Phosphagen kinase C-terminal domain in the interval I21–I244. Residues S24–R28, H82, R115, R166–M170, and R197–E202 contribute to the ATP site.

Belongs to the ATP:guanido phosphotransferase family.

It carries out the reaction L-arginyl-[protein] + ATP = N(omega)-phospho-L-arginyl-[protein] + ADP + H(+). Functionally, catalyzes the specific phosphorylation of arginine residues in proteins. The chain is Protein-arginine kinase from Staphylococcus aureus (strain USA300).